The following is a 476-amino-acid chain: Transcriptional regulator claA (476 aa).

Positions 25–52 (CDTCLKAKIKCSQAKPTCARCLQQGRQC) form a DNA-binding region, zn(2)-C6 fungal-type. Residues 63-92 (PSTKNLPLDQLQQPKGRTAGGTARRSLSRR) form a disordered region. The span at 64–77 (STKNLPLDQLQQPK) shows a compositional bias: polar residues.

Its subcellular location is the nucleus. In terms of biological role, transcriptional regulator; part of the cla gene cluster that produces clavatol and ortho-quinone methide. The clavatol biosynthesis cluster cla and the terrestric acid cluster tra are both involved in the production of peniphenones and penilactones. This is Transcriptional regulator claA from Penicillium crustosum (Blue mold fungus).